The sequence spans 432 residues: MPNVVVVGAQWGDEGKGKIVDLLTQYADVVVRFQGGNNAGHTLVVGGEKTVLHLIPSGILHPGKSCVIGNGVVIDPEVLVLEIDRLKAKGALKDDGQLVVSLDAHVIMPWHKAIDVAREQAMGEGKIGTTGRGIGPTYEDKVARRGLRIRDLLDEARLARKVKERAALAREELARLGAKLELDEPALVKRYAELGRRVSGYATDVSIWLHRALQQGKSLLFEGAQGTMLDVDHGTYPFVTSSNTVAGNAVVGCGLGPTAVDYVLGISKAYSTRVGGGPYPTELKDETGERLRKLGGEYGATTGRPRRTGWLDALALRYAVRVNGLSGIAMTKLDVLTGFDTVKIAVGYRLDGKVLDEMPSDPEVIERCTPVYEELPGWTEKLEHLRTWDDLPPRARAYVKRVEELAGVKVVGCSVGADRGETILVENPFLAR.

Residues 12–18 (GDEGKGK) and 40–42 (GHT) contribute to the GTP site. Asp13 serves as the catalytic Proton acceptor. Mg(2+)-binding residues include Asp13 and Gly40. IMP-binding positions include 13 to 16 (DEGK), 38 to 41 (NAGH), Thr130, Arg144, Gln225, Thr240, and Arg304. His41 (proton donor) is an active-site residue. 300-306 (ATTGRPR) contributes to the substrate binding site. GTP is bound by residues Arg306, 332–334 (KLD), and 414–416 (SVG).

The protein belongs to the adenylosuccinate synthetase family. Homodimer. Requires Mg(2+) as cofactor.

The protein localises to the cytoplasm. It catalyses the reaction IMP + L-aspartate + GTP = N(6)-(1,2-dicarboxyethyl)-AMP + GDP + phosphate + 2 H(+). It participates in purine metabolism; AMP biosynthesis via de novo pathway; AMP from IMP: step 1/2. Functionally, plays an important role in the de novo pathway of purine nucleotide biosynthesis. Catalyzes the first committed step in the biosynthesis of AMP from IMP. The chain is Adenylosuccinate synthetase from Anaeromyxobacter sp. (strain K).